The primary structure comprises 280 residues: Pantothenate synthetase (280 aa).

32 to 39 (MGALHAGH) is an ATP binding site. Residue histidine 39 is the Proton donor of the active site. Glutamine 63 contacts (R)-pantoate. Glutamine 63 serves as a coordination point for beta-alanine. Residue 149–152 (GEKD) coordinates ATP. A (R)-pantoate-binding site is contributed by glutamine 155. ATP contacts are provided by residues valine 178 and 186 to 189 (MSSR).

It belongs to the pantothenate synthetase family. Homodimer.

It localises to the cytoplasm. It catalyses the reaction (R)-pantoate + beta-alanine + ATP = (R)-pantothenate + AMP + diphosphate + H(+). Its pathway is cofactor biosynthesis; (R)-pantothenate biosynthesis; (R)-pantothenate from (R)-pantoate and beta-alanine: step 1/1. Catalyzes the condensation of pantoate with beta-alanine in an ATP-dependent reaction via a pantoyl-adenylate intermediate. This is Pantothenate synthetase from Ruegeria sp. (strain TM1040) (Silicibacter sp.).